Here is a 380-residue protein sequence, read N- to C-terminus: Cytochrome b (380 aa).

Helical transmembrane passes span 34–54 (FGSL…LLAM), 78–99 (WLIR…YLHI), 114–134 (WNTG…GYVL), and 179–199 (FFAL…IHLT). Residues histidine 84 and histidine 98 each contribute to the heme b site. Heme b is bound by residues histidine 183 and histidine 197. Histidine 202 is a binding site for a ubiquinone. The next 4 membrane-spanning stretches (helical) occupy residues 227 to 247 (LKDI…ALFS), 289 to 309 (LGGV…PFLH), 321 to 341 (LSQL…WVGS), and 348 to 368 (FIII…ILFP).

Belongs to the cytochrome b family. The cytochrome bc1 complex contains 11 subunits: 3 respiratory subunits (MT-CYB, CYC1 and UQCRFS1), 2 core proteins (UQCRC1 and UQCRC2) and 6 low-molecular weight proteins (UQCRH/QCR6, UQCRB/QCR7, UQCRQ/QCR8, UQCR10/QCR9, UQCR11/QCR10 and a cleavage product of UQCRFS1). This cytochrome bc1 complex then forms a dimer. The cofactor is heme b.

Its subcellular location is the mitochondrion inner membrane. In terms of biological role, component of the ubiquinol-cytochrome c reductase complex (complex III or cytochrome b-c1 complex) that is part of the mitochondrial respiratory chain. The b-c1 complex mediates electron transfer from ubiquinol to cytochrome c. Contributes to the generation of a proton gradient across the mitochondrial membrane that is then used for ATP synthesis. The sequence is that of Cytochrome b (MT-CYB) from Daption capense (Cape petrel).